The chain runs to 333 residues: Flap endonuclease 1 (333 aa).

Residues 1–99 (MGVAIRDILA…ETINERREHR (99 aa)) are N-domain. 7 residues coordinate Mg(2+): Asp28, Asp81, Glu153, Glu155, Asp174, Asp176, and Asp235. Residues 117–255 (EAYKQASASA…KTALKIVRNG (139 aa)) form an I-domain region. The tract at residues 325-333 (TQKTLDAWF) is interaction with PCNA.

Belongs to the XPG/RAD2 endonuclease family. FEN1 subfamily. In terms of assembly, interacts with PCNA. PCNA stimulates the nuclease activity without altering cleavage specificity. Mg(2+) serves as cofactor.

Functionally, structure-specific nuclease with 5'-flap endonuclease and 5'-3' exonuclease activities involved in DNA replication and repair. During DNA replication, cleaves the 5'-overhanging flap structure that is generated by displacement synthesis when DNA polymerase encounters the 5'-end of a downstream Okazaki fragment. Binds the unpaired 3'-DNA end and kinks the DNA to facilitate 5' cleavage specificity. Cleaves one nucleotide into the double-stranded DNA from the junction in flap DNA, leaving a nick for ligation. Also involved in the base excision repair (BER) pathway. Acts as a genome stabilization factor that prevents flaps from equilibrating into structures that lead to duplications and deletions. Also possesses 5'-3' exonuclease activity on nicked or gapped double-stranded DNA. The polypeptide is Flap endonuclease 1 (Methanoculleus marisnigri (strain ATCC 35101 / DSM 1498 / JR1)).